A 69-amino-acid chain; its full sequence is Large ribosomal subunit protein bL28 (69 aa).

This sequence belongs to the bacterial ribosomal protein bL28 family.

The chain is Large ribosomal subunit protein bL28 from Nitratidesulfovibrio vulgaris (strain ATCC 29579 / DSM 644 / CCUG 34227 / NCIMB 8303 / VKM B-1760 / Hildenborough) (Desulfovibrio vulgaris).